A 426-amino-acid polypeptide reads, in one-letter code: Putative FBD-associated F-box protein At5g53635 (426 aa).

Positions methionine 1–asparagine 45 constitute an F-box domain. The 53-residue stretch at methionine 353 to histidine 405 folds into the FBD domain.

The polypeptide is Putative FBD-associated F-box protein At5g53635 (Arabidopsis thaliana (Mouse-ear cress)).